Consider the following 287-residue polypeptide: Lipoyl synthase (287 aa).

Residues Cys-38, Cys-43, Cys-49, Cys-64, Cys-68, Cys-71, and Ser-277 each coordinate [4Fe-4S] cluster. A Radical SAM core domain is found at 50 to 266 (WSRGTATFLL…KTVAESLGLR (217 aa)).

The protein belongs to the radical SAM superfamily. Lipoyl synthase family. It depends on [4Fe-4S] cluster as a cofactor.

Its subcellular location is the cytoplasm. The enzyme catalyses [[Fe-S] cluster scaffold protein carrying a second [4Fe-4S](2+) cluster] + N(6)-octanoyl-L-lysyl-[protein] + 2 oxidized [2Fe-2S]-[ferredoxin] + 2 S-adenosyl-L-methionine + 4 H(+) = [[Fe-S] cluster scaffold protein] + N(6)-[(R)-dihydrolipoyl]-L-lysyl-[protein] + 4 Fe(3+) + 2 hydrogen sulfide + 2 5'-deoxyadenosine + 2 L-methionine + 2 reduced [2Fe-2S]-[ferredoxin]. Its pathway is protein modification; protein lipoylation via endogenous pathway; protein N(6)-(lipoyl)lysine from octanoyl-[acyl-carrier-protein]: step 2/2. Catalyzes the radical-mediated insertion of two sulfur atoms into the C-6 and C-8 positions of the octanoyl moiety bound to the lipoyl domains of lipoate-dependent enzymes, thereby converting the octanoylated domains into lipoylated derivatives. The sequence is that of Lipoyl synthase from Chlorobium phaeobacteroides (strain DSM 266 / SMG 266 / 2430).